The chain runs to 747 residues: Anoctamin-9 (747 aa).

Residues 1–193 are Cytoplasmic-facing; the sequence is MQDDESSQIF…LYFTWLGWYT (193 aa). The chain crosses the membrane as a helical span at residues 194-214; the sequence is YMLVPAAVVGLIVFLSGFALF. At 215–259 the chain is on the extracellular side; that stretch reads DSSQISKEICSANDIFMCPLGDHSHRYLRLSEMCTFAKLTHLFDN. The residue at position 245 (S245) is a Phosphoserine; by PKA. A helical transmembrane segment spans residues 260–280; it reads EGTVLFAIFMALWATVFLEIW. Topologically, residues 281 to 326 are cytoplasmic; the sequence is KRKRAHEVQSWKLYEWDEEEEEMALELINSPHYKLKDHRHSYLSST. Residues 327–347 form a helical membrane-spanning segment; sequence IILILSLFMICLMIGMAHVLV. The Extracellular segment spans residues 348 to 364; the sequence is VYRVLAGALFSSLVKQQ. The chain crosses the membrane as a helical span at residues 365–385; the sequence is VTTAVVVTGAVVHYIIIVIMT. Residues 386–414 lie on the Cytoplasmic side of the membrane; that stretch reads KVNKYVALKLCKFEESGTFSEQERKFTVK. The helical transmembrane segment at 415–435 threads the bilayer; sequence FFILQFFAHFSSLIYIAFILG. Over 436-543 the chain is Extracellular; it reads RINGHPGKST…EMMIQYGFTT (108 aa). A helical transmembrane segment spans residues 544–564; sequence IFVAAFPLAPLLALFSNLVEI. Over 565–595 the chain is Cytoplasmic; that stretch reads RLDAIKMVRLQRRLVPRKAKDIGTWLQVLET. Residues 596–616 traverse the membrane as a helical segment; the sequence is IGVLAVIANGMVIAFTSEFIP. Residues 617-695 are Extracellular-facing; sequence RVVYKYHYGP…FWFILAIRLT (79 aa). N630, N643, N665, and N681 each carry an N-linked (GlcNAc...) asparagine glycan. A helical membrane pass occupies residues 696–716; sequence FVILFEHFALCIKLIAAWFVP. Residues 717-747 lie on the Cytoplasmic side of the membrane; that stretch reads DVPQKVKNEVLQEKYDRIRHRMRFSSRSTDV.

Belongs to the anoctamin family. Post-translationally, phosphorylation on Ser-245 by cAMP-dependent protein kinase A (PKA)is essential for activation of its cation channel activity. As to expression, highly expressed in the olfactory epithelium, particularly in mature olfactory sensory neurons (at protein level). Expressed in the kidney (at protein level). Predominant expression seen in epithelial tissues. Highly expressed in the small intestine, colon and stomach.

Its subcellular location is the cell membrane. It localises to the endoplasmic reticulum. The catalysed reaction is a 1,2-diacyl-sn-glycero-3-phospho-L-serine(in) = a 1,2-diacyl-sn-glycero-3-phospho-L-serine(out). The enzyme catalyses a beta-D-galactosyl-(1&lt;-&gt;1')-N-acylsphing-4-enine(out) = a beta-D-galactosyl-(1&lt;-&gt;1')-N-acylsphing-4-enine(in). It catalyses the reaction a 1,2-diacyl-sn-glycero-3-phosphocholine(in) = a 1,2-diacyl-sn-glycero-3-phosphocholine(out). It carries out the reaction Ca(2+)(in) = Ca(2+)(out). The catalysed reaction is Na(+)(in) = Na(+)(out). The enzyme catalyses K(+)(in) = K(+)(out). Cation channel activity is activated via phosphorylation on Ser-245 by cAMP-dependent protein kinase A (PKA). Inhibited by NaCl. Functionally, PKA-activated nonselective cation channel. Discriminates poorly among cations but is more permeable to Ca(2+) ions than to monovalent cations. Acts as a calcium-activated calcium permeable channel which may operate as a endoplasmic reticulum (ER) Ca(2+)-leak channel, reducing the loading of the ER Ca(2+) store. Regulates intracellular Ca2+ signals, ion channel activity, and cytokine release in the renal tissue. Plays an important role in olfaction, amplifying cAMP-evoked cyclic nucleotide-gated (CNG) channel currents in the olfactory sensory neurons. Has calcium-dependent phospholipid scramblase activity; scrambles phosphatidylserine, phosphatidylcholine and galactosylceramide. Does not exhibit calcium-activated chloride channel (CaCC) activity. Can inhibit the activity of ANO1. This is Anoctamin-9 from Mus musculus (Mouse).